Here is a 434-residue protein sequence, read N- to C-terminus: Tol-Pal system protein TolB (434 aa).

The first 24 residues, 1-24, serve as a signal peptide directing secretion; the sequence is MKFSAYLTTLFIVLFSLFIQTVQA.

Belongs to the TolB family. As to quaternary structure, the Tol-Pal system is composed of five core proteins: the inner membrane proteins TolA, TolQ and TolR, the periplasmic protein TolB and the outer membrane protein Pal. They form a network linking the inner and outer membranes and the peptidoglycan layer.

The protein localises to the periplasm. Part of the Tol-Pal system, which plays a role in outer membrane invagination during cell division and is important for maintaining outer membrane integrity. The protein is Tol-Pal system protein TolB of Histophilus somni (strain 129Pt) (Haemophilus somnus).